Consider the following 155-residue polypeptide: Ribosomal RNA large subunit methyltransferase H (155 aa).

S-adenosyl-L-methionine is bound by residues Leu72, Gly103, and 122–127 (LSALTL).

This sequence belongs to the RNA methyltransferase RlmH family. Homodimer.

Its subcellular location is the cytoplasm. It catalyses the reaction pseudouridine(1915) in 23S rRNA + S-adenosyl-L-methionine = N(3)-methylpseudouridine(1915) in 23S rRNA + S-adenosyl-L-homocysteine + H(+). Functionally, specifically methylates the pseudouridine at position 1915 (m3Psi1915) in 23S rRNA. The polypeptide is Ribosomal RNA large subunit methyltransferase H (Escherichia fergusonii (strain ATCC 35469 / DSM 13698 / CCUG 18766 / IAM 14443 / JCM 21226 / LMG 7866 / NBRC 102419 / NCTC 12128 / CDC 0568-73)).